The following is a 299-amino-acid chain: ATP phosphoribosyltransferase (299 aa).

This sequence belongs to the ATP phosphoribosyltransferase family. Long subfamily. As to quaternary structure, equilibrium between an active dimeric form, an inactive hexameric form and higher aggregates. Interconversion between the various forms is largely reversible and is influenced by the natural substrates and inhibitors of the enzyme. Mg(2+) serves as cofactor.

Its subcellular location is the cytoplasm. It catalyses the reaction 1-(5-phospho-beta-D-ribosyl)-ATP + diphosphate = 5-phospho-alpha-D-ribose 1-diphosphate + ATP. Its pathway is amino-acid biosynthesis; L-histidine biosynthesis; L-histidine from 5-phospho-alpha-D-ribose 1-diphosphate: step 1/9. Its activity is regulated as follows. Feedback inhibited by histidine. Its function is as follows. Catalyzes the condensation of ATP and 5-phosphoribose 1-diphosphate to form N'-(5'-phosphoribosyl)-ATP (PR-ATP). Has a crucial role in the pathway because the rate of histidine biosynthesis seems to be controlled primarily by regulation of HisG enzymatic activity. This Escherichia coli O8 (strain IAI1) protein is ATP phosphoribosyltransferase.